We begin with the raw amino-acid sequence, 199 residues long: MAKVLVLYYSAYGHIEKMAYAVAEGAESAGAEVSVKRVPELVSEEVAKASHYKIDQPAPVATVEELGDYDAIIFGAGTRYGTVASQLRNFIDQTGSLWAKGKLVGKVGSAFTSSATQHGGQESTILGLIPTMLHHGMVVVGLPYAFQGQMGIDEIKGGSPYGASTITGGDGSRQPSEIELDAARFQGAHVARIAAKLAD.

One can recognise a Flavodoxin-like domain in the interval 4–190 (VLVLYYSAYG…DAARFQGAHV (187 aa)). FMN contacts are provided by residues 10 to 15 (SAYGHI) and 78 to 80 (TRY). Tyr12 is an NAD(+) binding site. Trp98 contributes to the substrate binding site. FMN is bound by residues 113–119 (SSATQHG) and His134.

The protein belongs to the WrbA family. Requires FMN as cofactor.

It carries out the reaction a quinone + NADH + H(+) = a quinol + NAD(+). It catalyses the reaction a quinone + NADPH + H(+) = a quinol + NADP(+). In Sinorhizobium fredii (strain NBRC 101917 / NGR234), this protein is NAD(P)H dehydrogenase (quinone).